We begin with the raw amino-acid sequence, 353 residues long: Thiamine-phosphate synthase (353 aa).

The interval 1–128 (MKSMPFAPIA…AASAAAIRYG (128 aa)) is unknown. The thiamine-phosphate synthase stretch occupies residues 129 to 353 (LYDLEVTVLQ…TSLQLLEALR (225 aa)). 4-amino-2-methyl-5-(diphosphooxymethyl)pyrimidine-binding positions include 185 to 189 (QYRNK) and N217. Mg(2+) contacts are provided by D218 and D237. S256 contacts 4-amino-2-methyl-5-(diphosphooxymethyl)pyrimidine. 282 to 284 (TAT) is a 2-[(2R,5Z)-2-carboxy-4-methylthiazol-5(2H)-ylidene]ethyl phosphate binding site. A 4-amino-2-methyl-5-(diphosphooxymethyl)pyrimidine-binding site is contributed by K285. G312 lines the 2-[(2R,5Z)-2-carboxy-4-methylthiazol-5(2H)-ylidene]ethyl phosphate pocket.

This sequence belongs to the thiamine-phosphate synthase family. Mg(2+) is required as a cofactor.

It catalyses the reaction 2-[(2R,5Z)-2-carboxy-4-methylthiazol-5(2H)-ylidene]ethyl phosphate + 4-amino-2-methyl-5-(diphosphooxymethyl)pyrimidine + 2 H(+) = thiamine phosphate + CO2 + diphosphate. It carries out the reaction 2-(2-carboxy-4-methylthiazol-5-yl)ethyl phosphate + 4-amino-2-methyl-5-(diphosphooxymethyl)pyrimidine + 2 H(+) = thiamine phosphate + CO2 + diphosphate. The enzyme catalyses 4-methyl-5-(2-phosphooxyethyl)-thiazole + 4-amino-2-methyl-5-(diphosphooxymethyl)pyrimidine + H(+) = thiamine phosphate + diphosphate. It functions in the pathway cofactor biosynthesis; thiamine diphosphate biosynthesis; thiamine phosphate from 4-amino-2-methyl-5-diphosphomethylpyrimidine and 4-methyl-5-(2-phosphoethyl)-thiazole: step 1/1. Functionally, condenses 4-methyl-5-(beta-hydroxyethyl)thiazole monophosphate (THZ-P) and 2-methyl-4-amino-5-hydroxymethyl pyrimidine pyrophosphate (HMP-PP) to form thiamine monophosphate (TMP). The sequence is that of Thiamine-phosphate synthase from Prochlorococcus marinus (strain MIT 9313).